A 352-amino-acid polypeptide reads, in one-letter code: MSDSPVTLPESIKLTEYSHGAGCGCKISPKVLSTILASQLPVFTDPNLLVGNQSRDDAAVYKLNDEIGIISTTDFFMPIVDDPFTFGRIAATNAISDIYAMGGTPIMAIAILGWPINKLPAEIAQQVVDGGRQACMEAGIMLAGGHSIDAPEPIFGLAVTGQIALSDLKQNDTAKKGDRLYLTKPIGIGILTTAQKQKKLHDEDSLIAVNAMCQLNTIGATIAKISGVNALTDVTGFGLAGHLLEMCQGANLTAKLKFDAVPLLPRALDYLALGCVPGGTHRNYDSYGEHLPELSEHQKAILCDPQTSGGLLVAVSAAAEAELIALLDANHITPICIGSLETPTTQANVVLC.

The active site involves Cys-23. ATP-binding positions include Lys-26 and 54–56 (SRD). A Mg(2+)-binding site is contributed by Asp-57. ATP contacts are provided by residues Asp-74, Asp-97, and 145-147 (GHS). Asp-97 contacts Mg(2+). Asp-233 is a Mg(2+) binding site.

The protein belongs to the selenophosphate synthase 1 family. Class I subfamily. As to quaternary structure, homodimer. The cofactor is Mg(2+).

It carries out the reaction hydrogenselenide + ATP + H2O = selenophosphate + AMP + phosphate + 2 H(+). In terms of biological role, synthesizes selenophosphate from selenide and ATP. This chain is Selenide, water dikinase, found in Shewanella putrefaciens (strain CN-32 / ATCC BAA-453).